The chain runs to 334 residues: Glycerol-1-phosphate dehydrogenase [NAD(P)+] (334 aa).

NAD(+)-binding positions include 77-81 and 99-102; these read GRPID and TTAS. Residue aspartate 104 participates in substrate binding. Serine 108 contributes to the NAD(+) binding site. Aspartate 147 is a substrate binding site. Zn(2+) is bound by residues aspartate 147 and histidine 225. Position 229 (histidine 229) interacts with substrate. Residue histidine 246 coordinates Zn(2+).

This sequence belongs to the glycerol-1-phosphate dehydrogenase family. Zn(2+) serves as cofactor.

It localises to the cytoplasm. It carries out the reaction sn-glycerol 1-phosphate + NAD(+) = dihydroxyacetone phosphate + NADH + H(+). It catalyses the reaction sn-glycerol 1-phosphate + NADP(+) = dihydroxyacetone phosphate + NADPH + H(+). The protein operates within membrane lipid metabolism; glycerophospholipid metabolism. Functionally, catalyzes the NAD(P)H-dependent reduction of dihydroxyacetonephosphate (DHAP or glycerone phosphate) to glycerol 1-phosphate (G1P). The G1P thus generated is used as the glycerophosphate backbone of phospholipids in the cellular membranes of Archaea. This is Glycerol-1-phosphate dehydrogenase [NAD(P)+] from Methanococcus maripaludis (strain C6 / ATCC BAA-1332).